A 407-amino-acid chain; its full sequence is Carbamoyl phosphate synthase small chain (407 aa).

A CPSase region spans residues 1–205; sequence MTETTPKTAP…LQDGYGEQDA (205 aa). Ser60, Gly257, and Gly259 together coordinate L-glutamine. One can recognise a Glutamine amidotransferase type-1 domain in the interval 209–397; it reads HVVALDFGVK…INLIRERKGQ (189 aa). Cys286 (nucleophile) is an active-site residue. 5 residues coordinate L-glutamine: Leu287, Gln290, Asn328, Gly330, and Phe331. Residues His370 and Glu372 contribute to the active site.

This sequence belongs to the CarA family. In terms of assembly, composed of two chains; the small (or glutamine) chain promotes the hydrolysis of glutamine to ammonia, which is used by the large (or ammonia) chain to synthesize carbamoyl phosphate. Tetramer of heterodimers (alpha,beta)4.

It carries out the reaction hydrogencarbonate + L-glutamine + 2 ATP + H2O = carbamoyl phosphate + L-glutamate + 2 ADP + phosphate + 2 H(+). The catalysed reaction is L-glutamine + H2O = L-glutamate + NH4(+). It participates in amino-acid biosynthesis; L-arginine biosynthesis; carbamoyl phosphate from bicarbonate: step 1/1. Its pathway is pyrimidine metabolism; UMP biosynthesis via de novo pathway; (S)-dihydroorotate from bicarbonate: step 1/3. Its function is as follows. Small subunit of the glutamine-dependent carbamoyl phosphate synthetase (CPSase). CPSase catalyzes the formation of carbamoyl phosphate from the ammonia moiety of glutamine, carbonate, and phosphate donated by ATP, constituting the first step of 2 biosynthetic pathways, one leading to arginine and/or urea and the other to pyrimidine nucleotides. The small subunit (glutamine amidotransferase) binds and cleaves glutamine to supply the large subunit with the substrate ammonia. This chain is Carbamoyl phosphate synthase small chain, found in Brucella suis (strain ATCC 23445 / NCTC 10510).